Reading from the N-terminus, the 176-residue chain is Large ribosomal subunit protein uL22 (176 aa).

Positions 113–176 (VVESRPSKDQ…ETSEAKGGSD (64 aa)) are disordered. Over residues 136 to 152 (SKAAATAPAKKSSASKA) the composition is skewed to low complexity. A compositionally biased stretch (basic and acidic residues) spans 159–176 (TKAESKTSETSEAKGGSD).

It belongs to the universal ribosomal protein uL22 family. In terms of assembly, part of the 50S ribosomal subunit.

In terms of biological role, this protein binds specifically to 23S rRNA; its binding is stimulated by other ribosomal proteins, e.g. L4, L17, and L20. It is important during the early stages of 50S assembly. It makes multiple contacts with different domains of the 23S rRNA in the assembled 50S subunit and ribosome. The globular domain of the protein is located near the polypeptide exit tunnel on the outside of the subunit, while an extended beta-hairpin is found that lines the wall of the exit tunnel in the center of the 70S ribosome. In Mycobacterium marinum (strain ATCC BAA-535 / M), this protein is Large ribosomal subunit protein uL22.